The following is a 167-amino-acid chain: Photosystem I assembly protein Ycf3 (167 aa).

TPR repeat units lie at residues 35 to 68 (AFTY…EVDA), 72 to 105 (SYIF…NPSL), and 120 to 153 (GEQA…APTN).

The protein belongs to the Ycf3 family.

Its subcellular location is the plastid. It localises to the chloroplast thylakoid membrane. Functionally, essential for the assembly of the photosystem I (PSI) complex. May act as a chaperone-like factor to guide the assembly of the PSI subunits. The sequence is that of Photosystem I assembly protein Ycf3 from Pleurastrum terricola (Filamentous green alga).